The following is a 331-amino-acid chain: Biotin synthase (331 aa).

In terms of domain architecture, Radical SAM core spans 39 to 264 (SELQTCYLVS…VFPQSMVRLA (226 aa)). Residues cysteine 54, cysteine 58, and cysteine 61 each coordinate [4Fe-4S] cluster. 4 residues coordinate [2Fe-2S] cluster: cysteine 98, cysteine 130, cysteine 190, and arginine 262.

Belongs to the radical SAM superfamily. Biotin synthase family. As to quaternary structure, homodimer. [4Fe-4S] cluster serves as cofactor. The cofactor is [2Fe-2S] cluster.

It carries out the reaction (4R,5S)-dethiobiotin + (sulfur carrier)-SH + 2 reduced [2Fe-2S]-[ferredoxin] + 2 S-adenosyl-L-methionine = (sulfur carrier)-H + biotin + 2 5'-deoxyadenosine + 2 L-methionine + 2 oxidized [2Fe-2S]-[ferredoxin]. Its pathway is cofactor biosynthesis; biotin biosynthesis; biotin from 7,8-diaminononanoate: step 2/2. Catalyzes the conversion of dethiobiotin (DTB) to biotin by the insertion of a sulfur atom into dethiobiotin via a radical-based mechanism. This Chlamydia abortus (strain DSM 27085 / S26/3) (Chlamydophila abortus) protein is Biotin synthase.